The chain runs to 71 residues: Putative membrane protein insertion efficiency factor (71 aa).

This sequence belongs to the UPF0161 family.

The protein resides in the cell membrane. In terms of biological role, could be involved in insertion of integral membrane proteins into the membrane. This is Putative membrane protein insertion efficiency factor from Clostridium acetobutylicum (strain ATCC 824 / DSM 792 / JCM 1419 / IAM 19013 / LMG 5710 / NBRC 13948 / NRRL B-527 / VKM B-1787 / 2291 / W).